Consider the following 294-residue polypeptide: Glutamate-binding protein GluB (294 aa).

A signal peptide spans 1–26 (MSHKRMFTRLAAATSAAVLAGITLTA). Cys-27 carries the N-palmitoyl cysteine lipid modification. Cys-27 carries S-diacylglycerol cysteine lipidation.

This sequence belongs to the bacterial solute-binding protein 3 family. In terms of assembly, the complex is composed of two ATP-binding proteins (GluA), two transmembrane proteins (GluC and GluD) and a solute-binding protein (GluB).

The protein resides in the cell membrane. Its function is as follows. Part of the ABC transporter complex GluABCD involved in glutamate uptake. Binds glutamate with a high affinity. In Corynebacterium efficiens (strain DSM 44549 / YS-314 / AJ 12310 / JCM 11189 / NBRC 100395), this protein is Glutamate-binding protein GluB.